The sequence spans 302 residues: Acetylglutamate kinase (302 aa).

Residues 67–68 (GG), arginine 89, and asparagine 189 each bind substrate.

This sequence belongs to the acetylglutamate kinase family. ArgB subfamily.

The protein localises to the cytoplasm. It catalyses the reaction N-acetyl-L-glutamate + ATP = N-acetyl-L-glutamyl 5-phosphate + ADP. Its pathway is amino-acid biosynthesis; L-arginine biosynthesis; N(2)-acetyl-L-ornithine from L-glutamate: step 2/4. Functionally, catalyzes the ATP-dependent phosphorylation of N-acetyl-L-glutamate. This is Acetylglutamate kinase from Streptomyces clavuligerus.